A 602-amino-acid polypeptide reads, in one-letter code: Aspartate--tRNA(Asp/Asn) ligase (602 aa).

Glu187 contacts L-aspartate. The tract at residues 211–214 is aspartate; the sequence is QQFK. L-aspartate-binding residues include Arg233 and His461. 233 to 235 is a binding site for ATP; that stretch reads RDE. Glu495 provides a ligand contact to ATP. Residue Arg502 participates in L-aspartate binding. 547 to 550 serves as a coordination point for ATP; it reads GLDR.

This sequence belongs to the class-II aminoacyl-tRNA synthetase family. Type 1 subfamily. In terms of assembly, homodimer.

It localises to the cytoplasm. The catalysed reaction is tRNA(Asx) + L-aspartate + ATP = L-aspartyl-tRNA(Asx) + AMP + diphosphate. In terms of biological role, aspartyl-tRNA synthetase with relaxed tRNA specificity since it is able to aspartylate not only its cognate tRNA(Asp) but also tRNA(Asn). Reaction proceeds in two steps: L-aspartate is first activated by ATP to form Asp-AMP and then transferred to the acceptor end of tRNA(Asp/Asn). The protein is Aspartate--tRNA(Asp/Asn) ligase of Chlorobium phaeovibrioides (strain DSM 265 / 1930) (Prosthecochloris vibrioformis (strain DSM 265)).